Consider the following 169-residue polypeptide: Copper-resistant cuproprotein CopI (169 aa).

A signal peptide spans Met1–Ala20. The Cu(2+) site is built by His98, Cys153, His158, and Met163.

This sequence belongs to the CopI family.

The protein resides in the periplasm. Involved in copper tolerance. Mediates copper tolerance in aerobiosis. May also mediate tolerance under anaerobiosis. Not required for virulence or colonization in the mouse model. In Vibrio cholerae serotype O1 (strain ATCC 39315 / El Tor Inaba N16961), this protein is Copper-resistant cuproprotein CopI.